Here is a 65-residue protein sequence, read N- to C-terminus: UPF0434 protein RPD_0454 (65 aa).

Belongs to the UPF0434 family.

The chain is UPF0434 protein RPD_0454 from Rhodopseudomonas palustris (strain BisB5).